Consider the following 124-residue polypeptide: Late histone H2A.2.1 (124 aa).

Positions 1–18 (MSGRGKGAKAKSKAKSRS) are enriched in basic residues. The tract at residues 1-21 (MSGRGKGAKAKSKAKSRSSRA) is disordered. Residue S2 is modified to N-acetylserine. Position 2 is a phosphoserine (S2). At Q104 the chain carries N5-methylglutamine. K119 is covalently cross-linked (Glycyl lysine isopeptide (Lys-Gly) (interchain with G-Cter in ubiquitin)).

Belongs to the histone H2A family. The nucleosome is a histone octamer containing two molecules each of H2A, H2B, H3 and H4 assembled in one H3-H4 heterotetramer and two H2A-H2B heterodimers. The octamer wraps approximately 147 bp of DNA. In terms of processing, monoubiquitination of Lys-119 gives a specific tag for epigenetic transcriptional repression. Post-translationally, phosphorylation of Ser-2 directly represses transcription.

The protein localises to the nucleus. Its subcellular location is the chromosome. Core component of nucleosome. Nucleosomes wrap and compact DNA into chromatin, limiting DNA accessibility to the cellular machineries which require DNA as a template. Histones thereby play a central role in transcription regulation, DNA repair, DNA replication and chromosomal stability. DNA accessibility is regulated via a complex set of post-translational modifications of histones, also called histone code, and nucleosome remodeling. The sequence is that of Late histone H2A.2.1 from Psammechinus miliaris (Green sea urchin).